Reading from the N-terminus, the 139-residue chain is Large-conductance mechanosensitive channel (139 aa).

2 consecutive transmembrane segments (helical) span residues 9–29 (AFAV…GAAF) and 79–99 (IQTV…VKAI).

It belongs to the MscL family. As to quaternary structure, homopentamer.

The protein resides in the cell inner membrane. Functionally, channel that opens in response to stretch forces in the membrane lipid bilayer. May participate in the regulation of osmotic pressure changes within the cell. This chain is Large-conductance mechanosensitive channel, found in Pseudomonas putida (strain ATCC 47054 / DSM 6125 / CFBP 8728 / NCIMB 11950 / KT2440).